The following is a 177-amino-acid chain: Insertion element IS1223 uncharacterized 20.7 kDa protein (177 aa).

A disordered region spans residues 112–131 (KQKGRPRKVPKKSKKTTKKL). Positions 113 to 128 (QKGRPRKVPKKSKKTT) are enriched in basic residues.

This sequence belongs to the IS150/IS1296 orfA family.

This is Insertion element IS1223 uncharacterized 20.7 kDa protein from Lactobacillus johnsonii.